The chain runs to 452 residues: AP-4 complex subunit mu-1 (452 aa).

One can recognise an MHD domain in the interval 184–451 (KNEVFLDVVE…LSHSDAYVIR (268 aa)).

Belongs to the adaptor complexes medium subunit family. As to quaternary structure, adaptor protein complex 4 (AP-4) is a heterotetramer composed of two large adaptins (epsilon-type subunit AP4E1 and beta-type subunit AP4B1), a medium adaptin (mu-type subunit AP4M1) and a small adaptin (sigma-type AP4S1). Interacts with tyrosine-based sorting signals on the cytoplasmic tail of cargo proteins such as APP, ATG9A, LAMP2 and NAGPA. Interacts with the C-terminal domain of GRID2. Interacts with GRIA1 and GRIA2; the interaction is indirect via CACNG3. Interacts with CACNG3; CACNG3 associates GRIA1 and GRIA2 with the adaptor protein complex 4 (AP-4) to target them to the somatodendritic compartment of neurons. Interacts with HOOK1 and HOOK2; the interactions are direct, mediate the interaction between FTS-Hook-FHIP (FHF) complex and AP-4 and the perinuclear distribution of AP-4.

It localises to the golgi apparatus. It is found in the trans-Golgi network membrane. The protein localises to the early endosome. Component of the adaptor protein complex 4 (AP-4). Adaptor protein complexes are vesicle coat components involved both in vesicle formation and cargo selection. They control the vesicular transport of proteins in different trafficking pathways. AP-4 forms a non clathrin-associated coat on vesicles departing the trans-Golgi network (TGN) and may be involved in the targeting of proteins from the trans-Golgi network (TGN) to the endosomal-lysosomal system. It is also involved in protein sorting to the basolateral membrane in epithelial cells and the proper asymmetric localization of somatodendritic proteins in neurons. Within AP-4, the mu-type subunit AP4M1 is directly involved in the recognition and binding of tyrosine-based sorting signals found in the cytoplasmic part of cargos. The adaptor protein complex 4 (AP-4) may also recognize other types of sorting signal. In Bos taurus (Bovine), this protein is AP-4 complex subunit mu-1.